We begin with the raw amino-acid sequence, 328 residues long: Sialic acid-binding Ig-like lectin 15 (328 aa).

The N-terminal stretch at 1–19 is a signal peptide; that stretch reads MEKSIWLLACLAWVLPTGS. At 20–263 the chain is on the extracellular side; it reads FVRTKIDTTE…RFHGASGAST (244 aa). The Ig-like V-type domain maps to 40-158; sequence PAQRWSMQVP…DVHDRYESRH (119 aa). Cystine bridges form between C64-C142 and C95-C104. N-acetylneuraminate is bound at residue R143. The 84-residue stretch at 168–251 folds into the Ig-like C2-type domain; it reads PRIVNISVLP…SLGRSEASVY (84 aa). Residue N172 is glycosylated (N-linked (GlcNAc...) asparagine). A disulfide bridge links C187 with C237. Residues 264 to 284 traverse the membrane as a helical segment; that stretch reads VALLLGALGFKALLLLGVLAA. Over 285-328 the chain is Cytoplasmic; that stretch reads RAARRRPEHLDTPDTPPRSQAQESNYENLSQMNPRSPPATMCSP. The segment at 289–328 is disordered; the sequence is RRPEHLDTPDTPPRSQAQESNYENLSQMNPRSPPATMCSP. Residues 301 to 318 are compositionally biased toward polar residues; it reads PRSQAQESNYENLSQMNP.

The protein belongs to the immunoglobulin superfamily. SIGLEC (sialic acid binding Ig-like lectin) family. In terms of assembly, interacts with TYROBP and HCST. In terms of tissue distribution, expressed in macrophage and/or dendritic cells of spleen and lymph nodes.

The protein resides in the membrane. Binds sialylated glycoproteins. In Homo sapiens (Human), this protein is Sialic acid-binding Ig-like lectin 15 (SIGLEC15).